A 753-amino-acid polypeptide reads, in one-letter code: 5-methyltetrahydropteroyltriglutamate--homocysteine methyltransferase (753 aa).

5-methyltetrahydropteroyltri-L-glutamate is bound by residues arginine 17–lysine 20 and lysine 117. L-homocysteine contacts are provided by residues isoleucine 431–serine 433 and glutamate 484. L-methionine contacts are provided by residues isoleucine 431–serine 433 and glutamate 484. Residues arginine 515 to cysteine 516 and tryptophan 561 contribute to the 5-methyltetrahydropteroyltri-L-glutamate site. Aspartate 599 is an L-homocysteine binding site. Aspartate 599 provides a ligand contact to L-methionine. Residue glutamate 605 coordinates 5-methyltetrahydropteroyltri-L-glutamate. Zn(2+) is bound by residues histidine 641, cysteine 643, and glutamate 665. Residue histidine 694 is the Proton donor of the active site. Position 726 (cysteine 726) interacts with Zn(2+).

The protein belongs to the vitamin-B12 independent methionine synthase family. Requires Zn(2+) as cofactor.

It carries out the reaction 5-methyltetrahydropteroyltri-L-glutamate + L-homocysteine = tetrahydropteroyltri-L-glutamate + L-methionine. Its pathway is amino-acid biosynthesis; L-methionine biosynthesis via de novo pathway; L-methionine from L-homocysteine (MetE route): step 1/1. Catalyzes the transfer of a methyl group from 5-methyltetrahydrofolate to homocysteine resulting in methionine formation. The protein is 5-methyltetrahydropteroyltriglutamate--homocysteine methyltransferase of Escherichia coli (strain SMS-3-5 / SECEC).